The following is a 1122-amino-acid chain: Transcription-repair-coupling factor (1122 aa).

Positions 593 to 758 (DLRNGMLMDR…MTGLKELSII (166 aa)) constitute a Helicase ATP-binding domain. 606–613 (GDVGFGKT) provides a ligand contact to ATP. The DEEQ box motif lies at 711-714 (DEEQ). Positions 779–933 (IIRDALLREH…GFTIASRDMD (155 aa)) constitute a Helicase C-terminal domain.

In the N-terminal section; belongs to the UvrB family. This sequence in the C-terminal section; belongs to the helicase family. RecG subfamily.

The protein localises to the cytoplasm. In terms of biological role, couples transcription and DNA repair by recognizing RNA polymerase (RNAP) stalled at DNA lesions. Mediates ATP-dependent release of RNAP and its truncated transcript from the DNA, and recruitment of nucleotide excision repair machinery to the damaged site. This chain is Transcription-repair-coupling factor, found in Rickettsia conorii (strain ATCC VR-613 / Malish 7).